An 885-amino-acid chain; its full sequence is MKASEIRKAFLDFFAQRGHSVVKSSSVIPHDDPSLLFTNAGMVQFKRTFLGEEKRPYNRAATSQKCMRAGGKHNDLENVGRTARHHTFFEMLGNFSFGDYFKEDAVEYAWRFLTEDMGLPREKLYATIHEGDSEMRLGPDEEARGFWARYLPADRILTFPTKDNFWSMGDTGPCGPCSEILIDQGAHVGCGKPDCRPGCDCDRFLELWNLVFMQFNRKEDGTMEPLPKPSIDTGMGLERVAAVIQKVPSNYDTDLFAPMRAKIAELSGYRYGTDPEKDVSVKVIADHGRAAAFLIGDGALPSNEGRGYVLRRVLRRALRHGRFLGLDRPFLSEVAVAVMESMQDAYPELLESRNFITRVILNEEERFNETLDNGLRLLQNEIRRLRDEGAGTIPGALIFKLYDTYGFPIDIITDMARDLDFKVDEAGFADLMEKQKEQSRMHWKGSGEREVSEAYRQLSAEGVSTRFVGYDTLSAQSTIAALVRDGQAVEEAPAGTDVEVVTSETPFYGAAGGQVGDQGVIVGPSSRVIVSDTLKLPGDLIVHVGKVESGRLRVGETVRLEVDQALRGDTALHHTATHLLHSVLRRVLGDHVKQAGSMVAPDRLRFDFTHFAAISRDELAEIERLVNEQIRVNRDLQVREMNLDEALKTGAMALFEEKYGDRVRMVEIPGFSRELCGGTHTHRTGDIGLFVVTQEMSIASGVRRIEALAGRRALDYLGRQQSVLHQAAGLLKAGPFEVAERVEKLLANQKQMEKELEALKSSLTSKRSADLLEQAEEVGGVKVLVMRVEADDPKALREMNDRFKERLSSGVTVLGAHQGDKAFLLVGVTPDLTSRVHAGNLIKEIVKTIGGSGGGRPDMAQAGGNRPEKLQDALDLARKLLRERL.

Zn(2+) is bound by residues His574, His578, Cys676, and His680.

Belongs to the class-II aminoacyl-tRNA synthetase family. Zn(2+) serves as cofactor.

It localises to the cytoplasm. The enzyme catalyses tRNA(Ala) + L-alanine + ATP = L-alanyl-tRNA(Ala) + AMP + diphosphate. In terms of biological role, catalyzes the attachment of alanine to tRNA(Ala) in a two-step reaction: alanine is first activated by ATP to form Ala-AMP and then transferred to the acceptor end of tRNA(Ala). Also edits incorrectly charged Ser-tRNA(Ala) and Gly-tRNA(Ala) via its editing domain. The polypeptide is Alanine--tRNA ligase (Syntrophobacter fumaroxidans (strain DSM 10017 / MPOB)).